Reading from the N-terminus, the 107-residue chain is U1-lycotoxin-Ls1b (107 aa).

The first 20 residues, 1 to 20 (MMKVLVVFALLVTLISYSSS), serve as a signal peptide directing secretion. A propeptide spanning residues 21 to 41 (EGIDDLEADELLSLMANEQTR) is cleaved from the precursor. Disulfide bonds link cysteine 44/cysteine 59, cysteine 51/cysteine 68, cysteine 58/cysteine 86, and cysteine 70/cysteine 84.

Belongs to the neurotoxin 19 (CSTX) family. 04 (U1-Lctx) subfamily. As to expression, expressed by the venom gland.

The protein resides in the secreted. In Lycosa singoriensis (Wolf spider), this protein is U1-lycotoxin-Ls1b.